Consider the following 147-residue polypeptide: D-aminoacyl-tRNA deacylase (147 aa).

The Gly-cisPro motif, important for rejection of L-amino acids motif lies at G136 to P137.

The protein belongs to the DTD family. As to quaternary structure, homodimer.

It is found in the cytoplasm. It carries out the reaction glycyl-tRNA(Ala) + H2O = tRNA(Ala) + glycine + H(+). The enzyme catalyses a D-aminoacyl-tRNA + H2O = a tRNA + a D-alpha-amino acid + H(+). An aminoacyl-tRNA editing enzyme that deacylates mischarged D-aminoacyl-tRNAs. Also deacylates mischarged glycyl-tRNA(Ala), protecting cells against glycine mischarging by AlaRS. Acts via tRNA-based rather than protein-based catalysis; rejects L-amino acids rather than detecting D-amino acids in the active site. By recycling D-aminoacyl-tRNA to D-amino acids and free tRNA molecules, this enzyme counteracts the toxicity associated with the formation of D-aminoacyl-tRNA entities in vivo and helps enforce protein L-homochirality. The chain is D-aminoacyl-tRNA deacylase from Streptococcus sanguinis (strain SK36).